The chain runs to 1895 residues: Diacylglycerol kinase eta (1895 aa).

Basic and acidic residues predominate over residues 1-10 (MAHLKLDTLH). A disordered region spans residues 1–37 (MAHLKLDTLHVQRSPRGSRRSSPSSGRSSACSSGSIS). Residues 20–37 (RSSPSSGRSSACSSGSIS) are compositionally biased toward low complexity. In terms of domain architecture, PH spans 82-175 (AIIKEGFLLK…WLGSLKTATA (94 aa)). 2 consecutive Phorbol-ester/DAG-type zinc fingers follow at residues 195–245 (HHHW…IANC) and 267–318 (PHQW…AVAC). Positions 349 to 485 (GNFSPLLVFV…DRWSIMVFEK (137 aa)) constitute a DAGKc domain. Disordered regions lie at residues 781-801 (ANID…ENTP), 1012-1053 (TTLC…MARL), 1113-1137 (QHRG…GANL), and 1172-1191 (PNTI…HGQD). Over residues 1113–1128 (QHRGGDNDSDYPEHEQ) the composition is skewed to basic and acidic residues. Residues 1172-1184 (PNTILTTSTSPTK) show a composition bias toward polar residues. The region spanning 1832–1895 (WSVNEVVTWL…LQAIKDLSEN (64 aa)) is the SAM domain.

The protein belongs to the eukaryotic diacylglycerol kinase family.

The protein resides in the cytoplasm. It carries out the reaction a 1,2-diacyl-sn-glycerol + ATP = a 1,2-diacyl-sn-glycero-3-phosphate + ADP + H(+). Its function is as follows. Phosphorylates diacylglycerol (DAG) to generate phosphatidic acid (PA). The protein is Diacylglycerol kinase eta of Drosophila melanogaster (Fruit fly).